Here is a 523-residue protein sequence, read N- to C-terminus: 2-isopropylmalate synthase (523 aa).

In terms of domain architecture, Pyruvate carboxyltransferase spans 5 to 267 (VIIFDTTLRD…ETGINAKEIH (263 aa)). Mn(2+) contacts are provided by Asp14, His202, His204, and Asn238. The regulatory domain stretch occupies residues 392–523 (KLAQLVVHSD…QKDRSELGGV (132 aa)).

Belongs to the alpha-IPM synthase/homocitrate synthase family. LeuA type 1 subfamily. As to quaternary structure, homodimer. Mn(2+) serves as cofactor.

The protein resides in the cytoplasm. The enzyme catalyses 3-methyl-2-oxobutanoate + acetyl-CoA + H2O = (2S)-2-isopropylmalate + CoA + H(+). The protein operates within amino-acid biosynthesis; L-leucine biosynthesis; L-leucine from 3-methyl-2-oxobutanoate: step 1/4. Catalyzes the condensation of the acetyl group of acetyl-CoA with 3-methyl-2-oxobutanoate (2-ketoisovalerate) to form 3-carboxy-3-hydroxy-4-methylpentanoate (2-isopropylmalate). This chain is 2-isopropylmalate synthase, found in Shewanella sediminis (strain HAW-EB3).